The following is a 147-amino-acid chain: Hemoglobin subunit gamma (147 aa).

Residues 3 to 147 (HFTAEEKAII…VATALAHKYH (145 aa)) enclose the Globin domain. Positions 64 and 93 each coordinate heme b.

It belongs to the globin family. In terms of assembly, heterotetramer of two alpha chains and two gamma chains in fetal hemoglobin (Hb F). Red blood cells.

Its function is as follows. Gamma chains make up the fetal hemoglobin F, in combination with alpha chains. The protein is Hemoglobin subunit gamma (HBG) of Otolemur crassicaudatus (Brown greater galago).